Here is a 328-residue protein sequence, read N- to C-terminus: MDNSTEETFSMDTSEPLEEGEQTHEQRPHTRSNPEGAEDRGVVHQAGVGSRSEGEGEAAQVEDPLPTTTTVPTNSTPPPTLEFQLKTPRVNCPEKVIICLDLSEEMSTQKLESFNGSKANALNSSQKMIEMFVRTKHKIDKRHEFALVVANNEAMWLSGFTSDPREVCSCLYDLETNVCESFNLEGLFNLIQQRTEFPVTDNVQTIPPPYVVRIILIYSRPASQPALALTDNMKKMLQCPYFFFDVIYIHNGSEEEELCWKDIFGFFSSLDSKGTSYKYEVSITGPALELHNCMARLLAHPLQRPFQSHAAYSLLEEEEESPESEVTV.

A compositionally biased stretch (polar residues) spans 1–13 (MDNSTEETFSMDT). Positions 1-84 (MDNSTEETFS…STPPPTLEFQ (84 aa)) are disordered. Residues 64–74 (PLPTTTTVPTN) are compositionally biased toward low complexity. Residues 96-297 (VIICLDLSEE…LELHNCMARL (202 aa)) form a VWFA-like region.

The protein belongs to the BABAM1 family. As to quaternary structure, component of the ARISC complex, at least composed of uimc1/rap80, abraxas1, brcc3/brcc36, BABAM2 and babam1/nba1. Component of the BRCA1-A complex, at least composed of brca1, bard1, uimc1/rap80, abraxas1, brcc3/brcc36, BABAM2 and babam1/nba1. In the BRCA1-A complex, interacts directly with abraxas1 and BABAM2. Component of the BRISC complex, at least composed of abraxas2, brcc3/brcc36, babam2 and babam1/nba1.

It localises to the cytoplasm. Its subcellular location is the nucleus. Functionally, component of the BRCA1-A complex, a complex that specifically recognizes 'Lys-63'-linked ubiquitinated histones H2A and H2AX at DNA lesions sites, leading to target the BRCA1-BARD1 heterodimer to sites of DNA damage at double-strand breaks (DSBs). The BRCA1-A complex also possesses deubiquitinase activity that specifically removes 'Lys-63'-linked ubiquitin on histones H2A and H2AX. In the BRCA1-A complex, it is required for the complex integrity and its localization at DSBs. Component of the BRISC complex, a multiprotein complex that specifically cleaves 'Lys-63'-linked ubiquitin in various substrates. In these 2 complexes, it is probably required to maintain the stability of babam2 and help the 'Lys-63'-linked deubiquitinase activity mediated by brcc3/brcc36 component. The BRISC complex is required for normal mitotic spindle assembly and microtubule attachment to kinetochores via its role in deubiquitinating numa1. Plays a role in interferon signaling via its role in the deubiquitination of the interferon receptor ifnar1; deubiquitination increases ifnar1 activity by enhancing its stability and cell surface expression. Down-regulates the response to bacterial lipopolysaccharide (LPS) via its role in ifnar1 deubiquitination. This Xenopus laevis (African clawed frog) protein is BRISC and BRCA1-A complex member 1 (babam1).